A 297-amino-acid polypeptide reads, in one-letter code: Thiosulfate sulfurtransferase (297 aa).

Lys14 carries the N6-acetyllysine; alternate modification. An N6-succinyllysine; alternate modification is found at Lys14. Positions 25–143 (LGPGLRVLDA…WLKEGHPVTS (119 aa)) constitute a Rhodanese 1 domain. The O-linked (GlcNAc) serine glycan is linked to Ser35. Ser38 is modified (phosphoserine). Position 136 is an N6-acetyllysine; alternate (Lys136). Lys136 bears the N6-succinyllysine; alternate mark. Residues 144 to 159 (EPSRPEPAVFKATLDR) are hinge. Lys163 bears the N6-acetyllysine mark. Residues 173–288 (QSKRFQLVDS…WFHQAPPETR (116 aa)) enclose the Rhodanese 2 domain. An N6-acetyllysine; alternate modification is found at Lys175. Lys175 bears the N6-succinyllysine; alternate mark. Arg187 contacts substrate. Residue Lys224 is modified to N6-acetyllysine; alternate. The residue at position 224 (Lys224) is an N6-succinyllysine; alternate. Residue Lys236 is modified to N6-acetyllysine. Lys237 is subject to N6-acetyllysine; alternate. Residue Lys237 is modified to N6-succinyllysine; alternate. Cys248 acts as the Cysteine persulfide intermediate in catalysis. Lys250 contributes to the substrate binding site.

Monomer.

It localises to the mitochondrion matrix. It carries out the reaction thiosulfate + hydrogen cyanide = thiocyanate + sulfite + 2 H(+). In terms of biological role, together with MRPL18, acts as a mitochondrial import factor for the cytosolic 5S rRNA. Only the nascent unfolded cytoplasmic form is able to bind to the 5S rRNA. Formation of iron-sulfur complexes and cyanide detoxification. Binds molecular oxygen and sulfur. The polypeptide is Thiosulfate sulfurtransferase (TST) (Cricetulus griseus (Chinese hamster)).